Here is a 195-residue protein sequence, read N- to C-terminus: GTP cyclohydrolase-2 (195 aa).

48–52 (RIHSE) is a GTP binding site. The Zn(2+) site is built by cysteine 53, cysteine 64, and cysteine 66. Residues glutamine 69, 90–92 (EGR), and threonine 112 contribute to the GTP site. The Proton acceptor role is filled by aspartate 124. Catalysis depends on arginine 126, which acts as the Nucleophile. 2 residues coordinate GTP: threonine 147 and lysine 152.

Belongs to the GTP cyclohydrolase II family. It depends on Zn(2+) as a cofactor.

The catalysed reaction is GTP + 4 H2O = 2,5-diamino-6-hydroxy-4-(5-phosphoribosylamino)-pyrimidine + formate + 2 phosphate + 3 H(+). Its pathway is cofactor biosynthesis; riboflavin biosynthesis; 5-amino-6-(D-ribitylamino)uracil from GTP: step 1/4. Functionally, catalyzes the conversion of GTP to 2,5-diamino-6-ribosylamino-4(3H)-pyrimidinone 5'-phosphate (DARP), formate and pyrophosphate. The sequence is that of GTP cyclohydrolase-2 from Campylobacter fetus subsp. fetus (strain 82-40).